The primary structure comprises 52 residues: Sporulation inhibitor sda (52 aa).

Forms a stable heterotetramer with KinA (comprising two molecules of each protein), by binding to the KinA dimerization/phosphotransfer domain.

Its function is as follows. Mediates a developmental checkpoint inhibiting initiation of sporulation (by preventing phosphorylation of spo0A) in response to defects in the replication initiation machinery. Inhibits autophosphorylation of the histidine protein kinase KinA, forming a molecular barricade that prevents productive interaction between the ATP-binding site in the catalytic domain and the phosphorylatable His in the phosphotransfer domain of KinA. Probably also inhibits the activity of KinB, but has relatively little effect on KinC. Has at least one target in vivo in addition to KinA as sda does not require KinA to inhibit sporulation. The sequence is that of Sporulation inhibitor sda (sda) from Bacillus subtilis (strain 168).